The chain runs to 254 residues: Phosphoribosylaminoimidazole-succinocarboxamide synthase (254 aa).

It belongs to the SAICAR synthetase family.

The enzyme catalyses 5-amino-1-(5-phospho-D-ribosyl)imidazole-4-carboxylate + L-aspartate + ATP = (2S)-2-[5-amino-1-(5-phospho-beta-D-ribosyl)imidazole-4-carboxamido]succinate + ADP + phosphate + 2 H(+). It functions in the pathway purine metabolism; IMP biosynthesis via de novo pathway; 5-amino-1-(5-phospho-D-ribosyl)imidazole-4-carboxamide from 5-amino-1-(5-phospho-D-ribosyl)imidazole-4-carboxylate: step 1/2. The protein is Phosphoribosylaminoimidazole-succinocarboxamide synthase of Brucella abortus (strain S19).